Reading from the N-terminus, the 163-residue chain is MRPLNDYLNSFLFTELLRGLRLTARHMVFRRSITLEFPEERAPKSPRFRGHLALRRYPNGEERCIACKLCEAVCPALAITIDSHQRADGTRRTTRYDIDMFKCIYCGFCEESCPVDSIVLTRLDTFHMERRDERVADKQKLLAMGDKYESQLAADRAADAPYR.

4Fe-4S ferredoxin-type domains are found at residues leucine 54–histidine 84 and threonine 94–leucine 123. [4Fe-4S] cluster contacts are provided by cysteine 64, cysteine 67, cysteine 70, cysteine 74, cysteine 103, cysteine 106, cysteine 109, and cysteine 113.

The protein belongs to the complex I 23 kDa subunit family. As to quaternary structure, NDH-1 is composed of 14 different subunits. Subunits NuoA, H, J, K, L, M, N constitute the membrane sector of the complex. Requires [4Fe-4S] cluster as cofactor.

It localises to the cell inner membrane. It catalyses the reaction a quinone + NADH + 5 H(+)(in) = a quinol + NAD(+) + 4 H(+)(out). NDH-1 shuttles electrons from NADH, via FMN and iron-sulfur (Fe-S) centers, to quinones in the respiratory chain. The immediate electron acceptor for the enzyme in this species is believed to be ubiquinone. Couples the redox reaction to proton translocation (for every two electrons transferred, four hydrogen ions are translocated across the cytoplasmic membrane), and thus conserves the redox energy in a proton gradient. This chain is NADH-quinone oxidoreductase subunit I, found in Halorhodospira halophila (strain DSM 244 / SL1) (Ectothiorhodospira halophila (strain DSM 244 / SL1)).